The primary structure comprises 236 residues: Small ribosomal subunit protein uS2c (236 aa).

It belongs to the universal ribosomal protein uS2 family.

It is found in the plastid. The protein resides in the chloroplast. This is Small ribosomal subunit protein uS2c (rps2) from Oryza sativa (Rice).